Here is a 380-residue protein sequence, read N- to C-terminus: F-box protein At4g18380 (380 aa).

The F-box domain maps to 22-70 (IDHFDNLPDSILLLIFNNIGDVKALGRCSVVSKRFHSLIPQVENVFVRV).

This Arabidopsis thaliana (Mouse-ear cress) protein is F-box protein At4g18380.